The chain runs to 555 residues: Glutamine--tRNA ligase (555 aa).

The 'HIGH' region signature appears at 34 to 44; that stretch reads PEPNGYLHIGH. Residues 35 to 37 and 41 to 47 contribute to the ATP site; these read EPN and HIGHAKS. L-glutamine is bound by residues Asp-67 and Tyr-212. ATP is bound by residues Thr-231, 261 to 262, and 269 to 271; these read RL and MSK. Positions 268-272 match the 'KMSKS' region motif; it reads IMSKR.

This sequence belongs to the class-I aminoacyl-tRNA synthetase family. In terms of assembly, monomer.

The protein resides in the cytoplasm. The enzyme catalyses tRNA(Gln) + L-glutamine + ATP = L-glutaminyl-tRNA(Gln) + AMP + diphosphate. This is Glutamine--tRNA ligase from Erwinia tasmaniensis (strain DSM 17950 / CFBP 7177 / CIP 109463 / NCPPB 4357 / Et1/99).